The sequence spans 662 residues: Acyl-coenzyme A oxidase acox-1.4 (662 aa).

FAD-binding positions include 148 to 151 (YAQT), 156 to 157 (GT), and Gly190. Substrate-binding positions include 284–287 (KVNH) and Arg294. FAD-binding positions include Arg319 and 339-342 (QQHR). Residues His341, Ser391, His395, and Gln403 each contribute to the ATP site. Gly410 serves as a coordination point for FAD. Residue 432-433 (YE) coordinates substrate. Catalysis depends on Glu433, which acts as the Proton acceptor. Glu435 contributes to the FAD binding site. Residues 526-529 (RASR) and Tyr574 contribute to the ATP site. The short motif at 660-662 (AKL) is the Microbody targeting signal element.

This sequence belongs to the acyl-CoA oxidase family. As to quaternary structure, homodimer. The cofactor is FAD.

It localises to the peroxisome. The catalysed reaction is asc-C9-CoA + O2 = asc-DeltaC9-CoA + H2O2. Its pathway is lipid metabolism; peroxisomal fatty acid beta-oxidation. Activated by ATP. ATP binding leads to a conformational change that promotes FAD cofactor binding and enzyme activity. ATP binding likely occurs during acox-1.4 folding and/or dimer formation. Functionally, involved in the first step of peroxisomal beta-oxidation by catalyzing the desaturation of fatty acid-derived side chains of ascaroside pheromones, which regulates development and behavior. Specifically, shortens ascarosides with a 9-carbon side chain (asc-C9) and, in association with acox-1.1, may contribute to the shortening of ascarosides with a 11-carbon side chain (asc-C11). May contribute to the production of indol-3-carbonyl(IC)-ascarosides in association with acox-1.1 and acox-3. This is Acyl-coenzyme A oxidase acox-1.4 from Caenorhabditis elegans.